Consider the following 281-residue polypeptide: Aliphatic sulfonates import ATP-binding protein SsuB (281 aa).

The 224-residue stretch at 40 to 263 (LTLRNLRKSF…RRGSADLAAL (224 aa)) folds into the ABC transporter domain. Position 72–79 (72–79 (GRSGCGKS)) interacts with ATP.

Belongs to the ABC transporter superfamily. Aliphatic sulfonates importer (TC 3.A.1.17.2) family. In terms of assembly, the complex is composed of two ATP-binding proteins (SsuB), two transmembrane proteins (SsuC) and a solute-binding protein (SsuA).

The protein localises to the cell inner membrane. The catalysed reaction is ATP + H2O + aliphatic sulfonate-[sulfonate-binding protein]Side 1 = ADP + phosphate + aliphatic sulfonateSide 2 + [sulfonate-binding protein]Side 1.. In terms of biological role, part of the ABC transporter complex SsuABC involved in aliphatic sulfonates import. Responsible for energy coupling to the transport system. The polypeptide is Aliphatic sulfonates import ATP-binding protein SsuB (Rhodopseudomonas palustris (strain BisA53)).